The sequence spans 723 residues: PX domain-containing protein EREL1 (723 aa).

Basic residues predominate over residues 1 to 12; sequence MMQRRSPPKHRH. Residues 1 to 26 are disordered; that stretch reads MMQRRSPPKHRHDGTSPLPLGMDWSP. The 118-residue stretch at 48-165 folds into the PX domain; that stretch reads YCVTIPSWIV…SFLELEAAAR (118 aa). 2 disordered regions span residues 169–193 and 209–230; these read QDVD…MVHP and YGSD…QDDI. Low complexity predominate over residues 172 to 193; it reads DQNASDSNNDRSSTSSSPMVHP. Polar residues predominate over residues 209–225; it reads YGSDTAYETSEVGSPSV. Coiled-coil stretches lie at residues 401 to 474 and 503 to 555; these read NERL…LRQK and KHVL…LEKE. Residues 698–723 are disordered; sequence DVKTTEDVNEENSDEKDEASRETLKR. The segment covering 704 to 714 has biased composition (acidic residues); that stretch reads DVNEENSDEKD.

Its subcellular location is the cytoplasm. It localises to the cytosol. The protein localises to the endosome membrane. Acts as an effector of RABF2A and RABF2B. Involved in vacuolar transport of storage proteins. Regulates membrane trafficking to protein storage vacuoles (PSVs). Binds specifically to phosphatidylinositol 3-monophosphate (PtdIns3P). This chain is PX domain-containing protein EREL1, found in Arabidopsis thaliana (Mouse-ear cress).